Here is a 96-residue protein sequence, read N- to C-terminus: uncharacterized protein (96 aa).

C10, C16, and C55 together coordinate [3Fe-4S] cluster. Residues 67-96 (AGDGERASADPAPSPAEAERHAAKDQHNLG) form a disordered region. Positions 83–96 (EAERHAAKDQHNLG) are enriched in basic and acidic residues.

Requires [3Fe-4S] cluster as cofactor.

In terms of biological role, electron transport protein for the cytochrome systems. This is an uncharacterized protein from Bradyrhizobium diazoefficiens (strain JCM 10833 / BCRC 13528 / IAM 13628 / NBRC 14792 / USDA 110).